The primary structure comprises 497 residues: Dihydrolipoyl dehydrogenase (497 aa).

Residues 60–69, lysine 78, glycine 142, and 170–172 contribute to the FAD site; these read EKEPSLGGTC and TGS. Cysteine 69 and cysteine 74 are oxidised to a cystine. Residues 207–214, glutamate 230, valine 264, and glycine 302 each bind NAD(+); that span reads GAGVIGLE. FAD-binding positions include aspartate 343 and 349-352; that span reads MLAH. Histidine 475 functions as the Proton acceptor in the catalytic mechanism.

This sequence belongs to the class-I pyridine nucleotide-disulfide oxidoreductase family. As to quaternary structure, homodimer. It depends on FAD as a cofactor.

Its subcellular location is the cytoplasm. The enzyme catalyses N(6)-[(R)-dihydrolipoyl]-L-lysyl-[protein] + NAD(+) = N(6)-[(R)-lipoyl]-L-lysyl-[protein] + NADH + H(+). The chain is Dihydrolipoyl dehydrogenase from Manduca sexta (Tobacco hawkmoth).